The following is a 219-amino-acid chain: MHFADIPLSKPCLNNPPTYPWSSPILSSIANPSLCDIVSSPSSVSSFASSDDFAFMNAYCLPIQQNHQFGSPVAASPNQQPLVESQNRRNVTYASLVIGKLGIAQLIRQQTDPPQIIHRKQDKGLMARVLSRSKKQEERENHSSDARDAIKSALRRRMRRREGRVQKALRPTPNLICSKCNTTFNHSTALMMHEATCLNQVPFKLSDFFVEDVIDDWLF.

Residues 177 to 197 fold into a zinc finger; it reads CSKCNTTFNHSTALMMHEATC.

Functionally, transcriptional activator which interacts with the mcb binding subunit complex formed by res2 and cdc10. Rep2 is required for the mitotic cell cycle start. The sequence is that of Transcriptional activator protein rep2 (rep2) from Schizosaccharomyces pombe (strain 972 / ATCC 24843) (Fission yeast).